The chain runs to 399 residues: Homeobox protein ceh-39 (399 aa).

Disordered regions lie at residues 32–91 and 158–187; these read PEPA…GDTE and AKKS…RPAS. Low complexity predominate over residues 60-79; sequence SSMCGSSSSSSSSSYSSGSS. The segment at residues 205–291 is a DNA-binding region (CUT); the sequence is NRQIGDDEEL…VRRALCFMKK (87 aa). The homeobox DNA-binding region spans 315–374; the sequence is SDERIRRFTFTQTQLDSLHTVFQQQDRPNREMQQALSATLKLNRSTVGNFFMNARRRLPK.

This sequence belongs to the CUT homeobox family. Expressed in hermaphrodite gonads.

Its subcellular location is the nucleus. It is found in the chromosome. Transcriptional regulator which is involved in the sex determination and X chromosome dosage compensation pathways. Directly binds to 5'-ATTGAT-3' sites in the promoter of sex-determining factor xol-1 to negatively regulate its expression and promote hermaphrodite development. Associates with condensed DNA during mitosis. The protein is Homeobox protein ceh-39 of Caenorhabditis elegans.